A 231-amino-acid chain; its full sequence is Protein crossbronx homolog (231 aa).

Positions Leu14–Ala168 constitute a UBC core domain.

The protein belongs to the ubiquitin-conjugating enzyme family. FTS subfamily.

The sequence is that of Protein crossbronx homolog from Culex quinquefasciatus (Southern house mosquito).